The following is an 88-amino-acid chain: MAHKKGLGSSKNGRDSNAQRLGVKAFGGQVVTGGSIIVRQRGTRLKPGQNVGRGSDDTLFALIDGKVKFVDRGRMGRFVAVEPVEAAQ.

Belongs to the bacterial ribosomal protein bL27 family.

The sequence is that of Large ribosomal subunit protein bL27 from Acidobacterium capsulatum (strain ATCC 51196 / DSM 11244 / BCRC 80197 / JCM 7670 / NBRC 15755 / NCIMB 13165 / 161).